The primary structure comprises 214 residues: uncharacterized protein (214 aa).

2 helical membrane-spanning segments follow: residues 23-43 (ILVGACAAVWLVFTGVSVAAA) and 65-85 (VLYAVIVVSALVIVGAIPVLL). Residues 96–115 (ATRPTGASVRGGRSIGSGHP) form a disordered region. Helical transmembrane passes span 152–172 (VVLTSAIGIALIAVAAATYLM) and 181–201 (WISYGLAGVVTAGMPVIEWLY).

It localises to the cell membrane. This is an uncharacterized protein from Mycobacterium tuberculosis (strain CDC 1551 / Oshkosh).